Reading from the N-terminus, the 411-residue chain is 2-oxoglutarate-dependent dioxygenase AOP3 (411 aa).

The region spanning 259 to 356 (GNASVGAKEA…RYAAALFSNP (98 aa)) is the Fe2OG dioxygenase domain. Residues H279, D281, and H336 each contribute to the Fe cation site. R347 serves as a coordination point for 2-oxoglutarate.

Belongs to the iron/ascorbate-dependent oxidoreductase family. Fe(2+) is required as a cofactor. In terms of tissue distribution, not expressed.

2-oxoglutarate-dependent dioxygenase involved in glucosinolates biosynthesis. Catalyzes the conversion of methylsulfinylalkyl glucosinolates to hydroxyalkyl glucosinolates. The polypeptide is 2-oxoglutarate-dependent dioxygenase AOP3 (AOP3) (Arabidopsis thaliana (Mouse-ear cress)).